A 358-amino-acid chain; its full sequence is Photosystem II protein D1 2 (358 aa).

Helical transmembrane passes span 28-45, 117-132, and 141-155; these read YVGW…AATI, HFLI…QWEL, and WICV…AAMA. Histidine 117 provides a ligand contact to chlorophyll a. Pheophytin a is bound at residue tyrosine 125. Aspartate 169 and glutamate 188 together coordinate [CaMn4O5] cluster. A helical membrane pass occupies residues 196–217; it reads FHMLGVAGVFGGSLFSAMHGSL. Histidine 197 contributes to the chlorophyll a binding site. A quinone contacts are provided by residues histidine 214 and 263-264; that span reads SF. Histidine 214 is a binding site for Fe cation. Histidine 271 serves as a coordination point for Fe cation. A helical transmembrane segment spans residues 273 to 287; that stretch reads FLGAWPVVGIWFTSM. Residues histidine 331, glutamate 332, aspartate 341, and alanine 343 each contribute to the [CaMn4O5] cluster site. Positions 344–358 are excised as a propeptide; that stretch reads AAESTPVALQAPAIG.

Belongs to the reaction center PufL/M/PsbA/D family. As to quaternary structure, PSII is composed of 1 copy each of membrane proteins PsbA, PsbB, PsbC, PsbD, PsbE, PsbF, PsbH, PsbI, PsbJ, PsbK, PsbL, PsbM, PsbT, PsbX, PsbY, PsbZ, Psb30/Ycf12, peripheral proteins PsbO, CyanoQ (PsbQ), PsbU, PsbV and a large number of cofactors. It forms dimeric complexes. The cofactor is The D1/D2 heterodimer binds P680, chlorophylls that are the primary electron donor of PSII, and subsequent electron acceptors. It shares a non-heme iron and each subunit binds pheophytin, quinone, additional chlorophylls, carotenoids and lipids. D1 provides most of the ligands for the Mn4-Ca-O5 cluster of the oxygen-evolving complex (OEC). There is also a Cl(-1) ion associated with D1 and D2, which is required for oxygen evolution. The PSII complex binds additional chlorophylls, carotenoids and specific lipids.. Tyr-160 forms a radical intermediate that is referred to as redox-active TyrZ, YZ or Y-Z. Post-translationally, C-terminally processed by CtpA; processing is essential to allow assembly of the oxygen-evolving complex and thus photosynthetic growth.

Its subcellular location is the cellular thylakoid membrane. The catalysed reaction is 2 a plastoquinone + 4 hnu + 2 H2O = 2 a plastoquinol + O2. Photosystem II (PSII) is a light-driven water:plastoquinone oxidoreductase that uses light energy to abstract electrons from H(2)O, generating O(2) and a proton gradient subsequently used for ATP formation. It consists of a core antenna complex that captures photons, and an electron transfer chain that converts photonic excitation into a charge separation. The D1/D2 (PsbA/PsbD) reaction center heterodimer binds P680, the primary electron donor of PSII as well as several subsequent electron acceptors. This chain is Photosystem II protein D1 2, found in Synechococcus sp. (strain CC9605).